Consider the following 309-residue polypeptide: Fe-S cluster assembly protein dre2 (309 aa).

The segment at 1-132 (MTTTIVLASP…LRRPAQVEAV (132 aa)) is N-terminal SAM-like domain. The segment at 133 to 195 (PLKLSTKKSA…DALVSDEETQ (63 aa)) is linker. 4 residues coordinate [2Fe-2S] cluster: C207, C216, C219, and C221. The tract at residues 207 to 221 (CSKPGKKKRCKNCTC) is fe-S binding site A. [4Fe-4S] cluster contacts are provided by C265, C268, C276, and C279. 2 short sequence motifs (cx2C motif) span residues 265–268 (CGSC) and 276–279 (CSGC). The interval 265–279 (CGSCYLGDAFRCSGC) is fe-S binding site B.

Belongs to the anamorsin family. In terms of assembly, monomer. Interacts with TAH18. Interacts with MIA40. [2Fe-2S] cluster is required as a cofactor. [4Fe-4S] cluster serves as cofactor.

The protein resides in the cytoplasm. It is found in the mitochondrion intermembrane space. Component of the cytosolic iron-sulfur (Fe-S) protein assembly (CIA) machinery required for the maturation of extramitochondrial Fe-S proteins. Part of an electron transfer chain functioning in an early step of cytosolic Fe-S biogenesis, facilitating the de novo assembly of a [4Fe-4S] cluster on the scaffold complex CFD1-NBP35. Electrons are transferred to DRE2 from NADPH via the FAD- and FMN-containing protein TAH18. TAH18-DRE2 are also required for the assembly of the diferric tyrosyl radical cofactor of ribonucleotide reductase (RNR), probably by providing electrons for reduction during radical cofactor maturation in the catalytic small subunit RNR2. In Schizosaccharomyces japonicus (strain yFS275 / FY16936) (Fission yeast), this protein is Fe-S cluster assembly protein dre2.